The following is a 314-amino-acid chain: Small ribosomal subunit protein uS11m (314 aa).

The N-terminal 37 residues, 1-37, are a transit peptide targeting the mitochondrion; that stretch reads MNGVSRHLRASSLLSLIRSYGGINSVCRFSSQSDGFS. Residues 34–138 are disordered; the sequence is DGFSGGRFRE…GSGFSAPSLS (105 aa). Polar residues predominate over residues 50 to 63; sequence ESANNSGLSNTGRI. Residues 103–114 show a composition bias toward low complexity; it reads SSLRSRLPNSLP.

It belongs to the universal ribosomal protein uS11 family. As to quaternary structure, component of the mitochondrial ribosome small subunit (28S) which comprises a 12S rRNA and about 30 distinct proteins.

Its subcellular location is the mitochondrion. Its function is as follows. Required for karyogamy during female gametophyte development, when the two polar nuclei fuse to form the diploid central cell nucleus. In Arabidopsis thaliana (Mouse-ear cress), this protein is Small ribosomal subunit protein uS11m.